The following is a 691-amino-acid chain: Kinetochore protein NDC80 (691 aa).

The interval 1–95 (MQSSTSTDQH…LNDKSNSRNS (95 aa)) is disordered. Positions 10–19 (HVLHHMDPHR) are enriched in basic and acidic residues. Residues 20–42 (FTSQIPTATSSQLRRRNSTNQGL) are compositionally biased toward polar residues. Phosphothreonine is present on Thr-38. Over residues 54-65 (TISGTGIPTGGI) the composition is skewed to low complexity. The residue at position 248 (Thr-248) is a Phosphothreonine. 2 coiled-coil regions span residues 376 to 446 (GKLE…SIKS) and 522 to 686 (KKSI…FETE).

The protein belongs to the NDC80/HEC1 family. In terms of assembly, component of the NDC80 complex, which consists of NDC80, NUF2, SPC24 and SPC25. The NDC80 complex is formed by two subcomplexes, NDC80-NUF2 and SPC24-SPC25, which are joined end-to-end through their coiled-coil domains. It has a rod-like structure with a length of 570 Angstroms and globular domains at either end. The NDC80-NUF2 globular domains are probably directed to microtubules, the SPC24-SPC25 globular domains to the centromere. NDC80 probably interacts with SMC1 and SMC2. Also interacts with KIN3. Interacts with DMC1.

The protein localises to the nucleus. It localises to the chromosome. It is found in the centromere. The protein resides in the kinetochore. Its function is as follows. Acts as a component of the essential kinetochore-associated NDC80 complex, which is involved in chromosome segregation and spindle checkpoint activity. The polypeptide is Kinetochore protein NDC80 (Saccharomyces cerevisiae (strain ATCC 204508 / S288c) (Baker's yeast)).